Consider the following 132-residue polypeptide: uncharacterized protein (132 aa).

The segment at 1 to 34 (MTAGAGGSPPTRRCPATEDRAPATVATPSSADPT) is disordered.

It to M.tuberculosis Rv2656c.

This is an uncharacterized protein from Mycobacterium tuberculosis (strain CDC 1551 / Oshkosh).